Consider the following 118-residue polypeptide: Mating-type P-specific polypeptide Pc (118 aa).

The segment at residues 29–97 (KTTIYKNGFM…VRKQIAKLER (69 aa)) is a DNA-binding region (HMG box).

The protein resides in the nucleus. Its function is as follows. Mating type proteins are sequence specific DNA-binding proteins that act as master switches in yeast differentiation by controlling gene expression in a cell type-specific fashion. Required for conjugation and efficient meiosis. This chain is Mating-type P-specific polypeptide Pc (matPc), found in Schizosaccharomyces kambucha (Fission yeast).